Consider the following 354-residue polypeptide: S-adenosylmethionine:tRNA ribosyltransferase-isomerase (354 aa).

It belongs to the QueA family. As to quaternary structure, monomer.

It is found in the cytoplasm. The catalysed reaction is 7-aminomethyl-7-carbaguanosine(34) in tRNA + S-adenosyl-L-methionine = epoxyqueuosine(34) in tRNA + adenine + L-methionine + 2 H(+). It participates in tRNA modification; tRNA-queuosine biosynthesis. In terms of biological role, transfers and isomerizes the ribose moiety from AdoMet to the 7-aminomethyl group of 7-deazaguanine (preQ1-tRNA) to give epoxyqueuosine (oQ-tRNA). In Salmonella heidelberg (strain SL476), this protein is S-adenosylmethionine:tRNA ribosyltransferase-isomerase.